The primary structure comprises 270 residues: UPF0354 protein BT9727_4425 (270 aa).

It belongs to the UPF0354 family.

In Bacillus thuringiensis subsp. konkukian (strain 97-27), this protein is UPF0354 protein BT9727_4425.